The following is a 288-amino-acid chain: Phytanoyl-CoA dioxygenase domain-containing protein 1 homolog (288 aa).

2-oxoglutarate-binding positions include K95, M134, 149 to 151 (HVD), and W167. Residues H149 and D151 each contribute to the Fe cation site. A Fe cation-binding site is contributed by H242. 2-oxoglutarate contacts are provided by S244 and R253.

This sequence belongs to the PhyH family. PHYHD1 subfamily. Fe cation is required as a cofactor.

Has alpha-ketoglutarate-dependent dioxygenase activity. Does not show detectable activity towards fatty acid CoA thioesters. Is not expected to be active with phytanoyl CoA. This is Phytanoyl-CoA dioxygenase domain-containing protein 1 homolog from Caenorhabditis briggsae.